A 214-amino-acid chain; its full sequence is Pyridoxine/pyridoxamine 5'-phosphate oxidase (214 aa).

Residues 9–12 (RKDY) and Lys-67 each bind substrate. FMN contacts are provided by residues 62-67 (RMVLLK), 77-78 (FT), Arg-83, Lys-84, and Gln-106. Substrate-binding residues include Tyr-124, Arg-128, and Ser-132. FMN contacts are provided by residues 141-142 (QS) and Trp-186. 192–194 (RLH) contacts substrate. Arg-196 provides a ligand contact to FMN.

This sequence belongs to the pyridoxamine 5'-phosphate oxidase family. Homodimer. FMN serves as cofactor.

The enzyme catalyses pyridoxamine 5'-phosphate + O2 + H2O = pyridoxal 5'-phosphate + H2O2 + NH4(+). It catalyses the reaction pyridoxine 5'-phosphate + O2 = pyridoxal 5'-phosphate + H2O2. It participates in cofactor metabolism; pyridoxal 5'-phosphate salvage; pyridoxal 5'-phosphate from pyridoxamine 5'-phosphate: step 1/1. The protein operates within cofactor metabolism; pyridoxal 5'-phosphate salvage; pyridoxal 5'-phosphate from pyridoxine 5'-phosphate: step 1/1. Catalyzes the oxidation of either pyridoxine 5'-phosphate (PNP) or pyridoxamine 5'-phosphate (PMP) into pyridoxal 5'-phosphate (PLP). The protein is Pyridoxine/pyridoxamine 5'-phosphate oxidase of Trichormus variabilis (strain ATCC 29413 / PCC 7937) (Anabaena variabilis).